Reading from the N-terminus, the 509-residue chain is ATP synthase subunit alpha (509 aa).

169–176 (GDRKTGKT) contacts ATP.

It belongs to the ATPase alpha/beta chains family. In terms of assembly, F-type ATPases have 2 components, CF(1) - the catalytic core - and CF(0) - the membrane proton channel. CF(1) has five subunits: alpha(3), beta(3), gamma(1), delta(1), epsilon(1). CF(0) has three main subunits: a(1), b(2) and c(9-12). The alpha and beta chains form an alternating ring which encloses part of the gamma chain. CF(1) is attached to CF(0) by a central stalk formed by the gamma and epsilon chains, while a peripheral stalk is formed by the delta and b chains.

It localises to the cell membrane. It catalyses the reaction ATP + H2O + 4 H(+)(in) = ADP + phosphate + 5 H(+)(out). Its function is as follows. Produces ATP from ADP in the presence of a proton gradient across the membrane. The alpha chain is a regulatory subunit. This Lacticaseibacillus casei (strain BL23) (Lactobacillus casei) protein is ATP synthase subunit alpha.